The following is a 94-amino-acid chain: Cell division topological specificity factor (94 aa).

Belongs to the MinE family.

Its function is as follows. Prevents the cell division inhibition by proteins MinC and MinD at internal division sites while permitting inhibition at polar sites. This ensures cell division at the proper site by restricting the formation of a division septum at the midpoint of the long axis of the cell. The sequence is that of Cell division topological specificity factor from Alkaliphilus metalliredigens (strain QYMF).